A 159-amino-acid polypeptide reads, in one-letter code: Phosphopantetheine adenylyltransferase (159 aa).

Residue Ser8 coordinates substrate. Residues 8–9 (SF) and His16 each bind ATP. Substrate is bound by residues Lys40, Thr72, and Arg86. Residues 87-89 (GLR), Glu97, and 122-128 (HSFVSSS) contribute to the ATP site.

Belongs to the bacterial CoaD family. As to quaternary structure, homohexamer. The cofactor is Mg(2+).

Its subcellular location is the cytoplasm. The enzyme catalyses (R)-4'-phosphopantetheine + ATP + H(+) = 3'-dephospho-CoA + diphosphate. It participates in cofactor biosynthesis; coenzyme A biosynthesis; CoA from (R)-pantothenate: step 4/5. Reversibly transfers an adenylyl group from ATP to 4'-phosphopantetheine, yielding dephospho-CoA (dPCoA) and pyrophosphate. This chain is Phosphopantetheine adenylyltransferase, found in Synechococcus sp. (strain JA-3-3Ab) (Cyanobacteria bacterium Yellowstone A-Prime).